The sequence spans 709 residues: Frizzled-6 (709 aa).

The signal sequence occupies residues 1–18 (MERSPFLLACILLPLVRG). The 114-residue stretch at 19–132 (HSLFTCEPIT…CNRLPHCDDT (114 aa)) folds into the FZ domain. The Extracellular portion of the chain corresponds to 19-201 (HSLFTCEPIT…SDELDFAKSF (183 aa)). Cystine bridges form between Cys-24/Cys-85, Cys-32/Cys-78, Cys-69/Cys-106, Cys-95/Cys-129, and Cys-99/Cys-123. N-linked (GlcNAc...) asparagine glycosylation occurs at Asn-38. Residues 202-222 (IGIVSIFCLCATLFTFLTFLI) traverse the membrane as a helical segment. Over 223-233 (DVRRFRYPERP) the chain is Cytoplasmic. The chain crosses the membrane as a helical span at residues 234 to 254 (IIYYSVCYSIVSLMYFVGFLL). Residues 255 to 284 (GNSTACNKADEKLELGDTVVLGSKNKACSV) lie on the Extracellular side of the membrane. Asn-256 carries an N-linked (GlcNAc...) asparagine glycan. Residues 285–305 (VFMFLYFFTMAGTVWWVILTI) form a helical membrane-spanning segment. At 306–324 (TWFLAAGRKWSCEAIEQKA) the chain is on the cytoplasmic side. The chain crosses the membrane as a helical span at residues 325–345 (VWFHAVAWGAPGFLTVMLLAM). Topologically, residues 346–370 (NKVEGDNISGVCFVGLYDLDASRYF) are extracellular. Residue Asn-352 is glycosylated (N-linked (GlcNAc...) asparagine). A helical membrane pass occupies residues 371 to 391 (VLLPLCLCVFVGLSLLLAGII). The Cytoplasmic portion of the chain corresponds to 392–416 (SLNHVRQVIQHDGRNQEKLKKFMIR). A helical membrane pass occupies residues 417-437 (IGVFSGLYLVPLVTLLGCYVY). Topologically, residues 438–473 (ELVNRITWEMTWFSDHCHQYRIPCPYQANPKARPEL) are extracellular. Residues 474-494 (ALFMIKYLMTLIVGISAVFWV) form a helical membrane-spanning segment. The Cytoplasmic portion of the chain corresponds to 495 to 709 (GSKKTCTEWA…EQGAGSHSDA (215 aa)). The short motif at 498–503 (KTCTEW) is the Lys-Thr-X-X-X-Trp motif, mediates interaction with the PDZ domain of Dvl family members element. Residues 583–594 (QETSTEVHTSPE) are compositionally biased toward polar residues. The disordered stretch occupies residues 583–709 (QETSTEVHTS…EQGAGSHSDA (127 aa)). Positions 596 to 616 (SVKEGRADRANTPSAKDRDCG) are enriched in basic and acidic residues. Residues 620 to 629 (GPSSKLSGNR) are compositionally biased toward polar residues. The segment covering 630 to 644 (NGRESRAGGLKERSN) has biased composition (basic and acidic residues). Ser-656 bears the Phosphoserine mark. Polar residues predominate over residues 669–690 (CSTSQAASSPEPTSLKGSTSLP). Positions 697 to 709 (ARKEQGAGSHSDA) are enriched in basic and acidic residues.

This sequence belongs to the G-protein coupled receptor Fz/Smo family. Interacts with LMBR1L. Ubiquitinated by ZNRF3, leading to its degradation by the proteasome. Expressed in both hair cells and supporting cells in the utricle, saccule, cristae and the organ of Corti in the inner ear (at protein level).

It localises to the membrane. Its subcellular location is the cell membrane. It is found in the cell surface. The protein localises to the apical cell membrane. The protein resides in the cytoplasmic vesicle membrane. It localises to the endoplasmic reticulum membrane. Receptor for Wnt proteins. Most of frizzled receptors are coupled to the beta-catenin canonical signaling pathway, which leads to the activation of disheveled proteins, inhibition of GSK-3 kinase, nuclear accumulation of beta-catenin and activation of Wnt target genes. A second signaling pathway involving PKC and calcium fluxes has been seen for some family members, but it is not yet clear if it represents a distinct pathway or if it can be integrated in the canonical pathway, as PKC seems to be required for Wnt-mediated inactivation of GSK-3 kinase. Both pathways seem to involve interactions with G-proteins. Activation by Wnt5A stimulates PKC activity via a G-protein-dependent mechanism. Involved in transduction and intercellular transmission of polarity information during tissue morphogenesis and/or in differentiated tissues. Together with FZD3, is involved in the neural tube closure and plays a role in the regulation of the establishment of planar cell polarity (PCP), particularly in the orientation of asymmetric bundles of stereocilia on the apical faces of a subset of auditory and vestibular sensory cells located in the inner ear. The chain is Frizzled-6 (Fzd6) from Mus musculus (Mouse).